A 279-amino-acid polypeptide reads, in one-letter code: Putative pyruvate, phosphate dikinase regulatory protein (279 aa).

153–160 (GVSRTSKT) is an ADP binding site.

The protein belongs to the pyruvate, phosphate/water dikinase regulatory protein family. PDRP subfamily.

It catalyses the reaction N(tele)-phospho-L-histidyl/L-threonyl-[pyruvate, phosphate dikinase] + ADP = N(tele)-phospho-L-histidyl/O-phospho-L-threonyl-[pyruvate, phosphate dikinase] + AMP + H(+). The enzyme catalyses N(tele)-phospho-L-histidyl/O-phospho-L-threonyl-[pyruvate, phosphate dikinase] + phosphate + H(+) = N(tele)-phospho-L-histidyl/L-threonyl-[pyruvate, phosphate dikinase] + diphosphate. In terms of biological role, bifunctional serine/threonine kinase and phosphorylase involved in the regulation of the pyruvate, phosphate dikinase (PPDK) by catalyzing its phosphorylation/dephosphorylation. The protein is Putative pyruvate, phosphate dikinase regulatory protein of Bradyrhizobium diazoefficiens (strain JCM 10833 / BCRC 13528 / IAM 13628 / NBRC 14792 / USDA 110).